The following is a 64-amino-acid chain: Large ribosomal subunit protein bL35 (64 aa).

Belongs to the bacterial ribosomal protein bL35 family.

This chain is Large ribosomal subunit protein bL35, found in Streptomyces avermitilis (strain ATCC 31267 / DSM 46492 / JCM 5070 / NBRC 14893 / NCIMB 12804 / NRRL 8165 / MA-4680).